A 1394-amino-acid polypeptide reads, in one-letter code: Coiled-coil domain-containing protein 7 (1394 aa).

Residues 308–340 (LLDAEYKQIQRDFELLSEEKLVLENELQKLKDT) adopt a coiled-coil conformation. A disordered region spans residues 345–375 (STNNRTKKAAKTVKKKDKGKSEDSEKKMSSE). Residues 349–362 (RTKKAAKTVKKKDK) are compositionally biased toward basic residues. Residues 363–375 (GKSEDSEKKMSSE) are compositionally biased toward basic and acidic residues. A coiled-coil region spans residues 383–421 (LDQVQKVARLEIENKVLQEQLKQALQEAEKAKHQLNYFL). Disordered stretches follow at residues 431–617 (EGKT…EVPD), 634–806 (EQMK…LEHQ), and 819–842 (NEKL…PMLK). Polar residues predominate over residues 437–446 (TMRVGNSQTE). A compositionally biased stretch (basic and acidic residues) spans 447-462 (VKGEDSKTIPLEKETG). Over residues 464–473 (SLVSDSGGQK) the composition is skewed to polar residues. Basic and acidic residues predominate over residues 491–500 (LIEKSSEKKR). Composition is skewed to polar residues over residues 503-513 (PAISDLSQILK), 521-538 (LESS…NKSP), and 546-571 (LTTV…NETV). Positions 583–600 (ESKKADVSEEQLQKKTEE) are enriched in basic and acidic residues. The span at 663–679 (SRSQSETKNLEATGNES) shows a compositional bias: polar residues. A compositionally biased stretch (basic and acidic residues) spans 695–707 (QDTKSKTEVEVKK). Residues 711–721 (FQDNQLNTHNE) show a composition bias toward polar residues. A compositionally biased stretch (basic and acidic residues) spans 722–736 (VPNERLIVEHQESMS). Residues 780–790 (KEQSTLKGQRI) are compositionally biased toward polar residues. Basic and acidic residues-rich tracts occupy residues 791–806 (TTHE…LEHQ) and 830–842 (THGE…PMLK).

Functionally, may play a role in tumorigenesis. This chain is Coiled-coil domain-containing protein 7 (CCDC7), found in Macaca fascicularis (Crab-eating macaque).